The sequence spans 274 residues: Thiamine kinase (274 aa).

The protein belongs to the thiamine kinase family.

The enzyme catalyses thiamine + ATP = thiamine phosphate + ADP + H(+). The protein operates within cofactor biosynthesis; thiamine diphosphate biosynthesis; thiamine phosphate from thiamine: step 1/1. In terms of biological role, catalyzes the ATP-dependent phosphorylation of thiamine to thiamine phosphate. Is involved in thiamine salvage. The protein is Thiamine kinase of Salmonella paratyphi A (strain ATCC 9150 / SARB42).